Reading from the N-terminus, the 854-residue chain is MPIKESFKRIKSDHQNQNQDQINYVDENVKENLSTYYLVKRISFEYSFKEFLNSDQYLSIDTSIIFSKNIMNALYYLHSNNIIYADLKPSNILIDSKGIFKLNSINNSILIENNNNNNNNNNNNNNNNNNNNNNNQQIMITSRQQIFNLYNNNIDNDNNNNINESIYYLSPEVLKGYTYSFSSDIWSFGVLLFKCITGYYPFYSNDATKLIESIIYDNYLDPIIRLPSDNNDLIQQQHFNDLISKILEKNPQKRITWPKLFIHPFFKNQQTQQVNEIINKSSNTTLQLLNKSSSSSSSSSSSSSSSSSSSSSSSLSFQQQQQPNNISSPNLENQVIRLNKVKIPPLNISQTNSLNDFSNLIENNNFTRLISEFDHSIDFEASPIISPNRPSSPPLSSLSSCSSSSSSSVPIIFNKTIKDLQLLINNNNNNNNNNNNNNNNNNNNNNNNNYQEIIEYFNFISKFIKTKTTIITKLTLLNYLIDLLLLSNNQYSSIIEKLLIIINEHTILIKQLVQQIKISNDTIIKVKIIHLLGIIIGKSNNLSINSKDSIIQLLEYLNNEISSFNNNNNIQLSLKRKLVSTFGEILFYFSTLDEITLSTKWGILSLEKYINTLLNLFLINDSSSPSSSPPPSSSSSSSSPSSPSSTSPSLLSSIPNPSLFPQISLSSIITTNKAIDKTILLYLIKTFDNLLITRPIYIKYFSIKSKQLLNQFLKYIKDDNNLEDELNNNIKISSSSAFYRIIKQQPILSLSLIDNCNESVMINMIDLNQHWRVQISFLNILFILITINNNFIDDNNNINNINNNNNEFIKKFLEKLYNHYINQKNQINPIVFKKSFIFYSILKDFNNNNFIKIN.

The 266-residue stretch at 1–266 (MPIKESFKRI…WPKLFIHPFF (266 aa)) folds into the Protein kinase domain. Residues Asn-32 and Asn-106 are each glycosylated (N-linked (GlcNAc...) asparagine). Positions 116–135 (NNNNNNNNNNNNNNNNNNNN) are disordered. N-linked (GlcNAc...) asparagine glycans are attached at residues Asn-163, Asn-279, Asn-283, and Asn-290. Residues 289 to 331 (LNKSSSSSSSSSSSSSSSSSSSSSSSLSFQQQQQPNNISSPNL) form a disordered region. Residues 292–322 (SSSSSSSSSSSSSSSSSSSSSSSLSFQQQQQ) are compositionally biased toward low complexity. N-linked (GlcNAc...) asparagine glycans are attached at residues Asn-325, Asn-347, and Asn-365. The tract at residues 384–408 (IISPNRPSSPPLSSLSSCSSSSSSS) is disordered. N-linked (GlcNAc...) asparagine glycosylation is present at Asn-414. The interval 425-446 (NNNNNNNNNNNNNNNNNNNNNN) is disordered. N-linked (GlcNAc...) asparagine glycans are attached at residues Asn-520, Asn-541, and Asn-620. Positions 627–650 (SSPPPSSSSSSSSPSSPSSTSPSL) are disordered. Over residues 633–650 (SSSSSSSPSSPSSTSPSL) the composition is skewed to low complexity. Residue Asn-757 is glycosylated (N-linked (GlcNAc...) asparagine). Residues 770–792 (HWRVQISFLNILFILITINNNFI) form a helical membrane-spanning segment.

The protein belongs to the protein kinase superfamily. Ser/Thr protein kinase family.

The protein localises to the membrane. The protein is Probable inactive serine/threonine-protein kinase DDB_G0274821 of Dictyostelium discoideum (Social amoeba).